The sequence spans 277 residues: MDNAVDRHVFYISDGTAITAEVLGHAVMSQFPVTISSITLPFVENESRARAVKDQIDAIYHQTGVRPLVFYSIVLPEIRAIILQSEGFCQDIVQALVAPLQQEMKLDPTPIAHRTHGLNPNNLNKYDARIAAIDYTLAHDDGISLRNLDQAQVILLGVSRCGKTPTSLYLAMQFGIRTANYPFIADDMDNLVLPASLKPLQHKLFGLTIDPERLAAIREERRENSRYASLRQCRMEVAEVEALYRKNQIPWINSTNYSVEEIATKILDIMGLSRRMY.

157–164 (GVSRCGKT) lines the ADP pocket.

The protein belongs to the pyruvate, phosphate/water dikinase regulatory protein family. PSRP subfamily.

It carries out the reaction [pyruvate, water dikinase] + ADP = [pyruvate, water dikinase]-phosphate + AMP + H(+). The enzyme catalyses [pyruvate, water dikinase]-phosphate + phosphate + H(+) = [pyruvate, water dikinase] + diphosphate. Functionally, bifunctional serine/threonine kinase and phosphorylase involved in the regulation of the phosphoenolpyruvate synthase (PEPS) by catalyzing its phosphorylation/dephosphorylation. This chain is Phosphoenolpyruvate synthase regulatory protein, found in Shigella boydii serotype 4 (strain Sb227).